Here is a 407-residue protein sequence, read N- to C-terminus: RNA-binding motif, single-stranded-interacting protein 2 (407 aa).

Position 1 is an N-acetylmethionine (Met-1). The segment at 29-54 (QQMAPPSPSNSTPNSSSGSNGNDQLS) is disordered. Positions 37 to 50 (SNSTPNSSSGSNGN) are enriched in low complexity. RRM domains lie at 56–129 (TNLY…MAKQ) and 135–220 (TNLY…FADG). Ser-106 is modified (phosphoserine). Thr-269 is subject to Phosphothreonine. Residues Ser-280 and Ser-285 each carry the phosphoserine modification.

The protein resides in the nucleus. The protein is RNA-binding motif, single-stranded-interacting protein 2 (RBMS2) of Homo sapiens (Human).